Reading from the N-terminus, the 1242-residue chain is Protein STU1 (1242 aa).

Composition is skewed to low complexity over residues 138–156 (LNSS…TATK) and 548–567 (AASP…PSSA). Disordered regions lie at residues 138–161 (LNSS…KPHE), 538–612 (KQLE…NPVF), 637–711 (HVET…LGLG), 748–839 (AEHE…NGNI), 853–884 (AFQT…RPEA), and 1077–1111 (HPAP…EKRT). Basic and acidic residues predominate over residues 574-593 (KKMDLKAMLAERRRAVKEAG). 2 stretches are compositionally biased toward low complexity: residues 640–660 (TSSP…RIRP) and 701–711 (SPSLSPSLGLG). Residues 748 to 767 (AEHEVDELTLKEGQKTRDDG) are compositionally biased toward basic and acidic residues. Composition is skewed to polar residues over residues 802–815 (QQGN…SGRV), 824–837 (ATGT…SRNG), and 856–871 (TPLN…SSAI). Low complexity predominate over residues 1082–1104 (SSSADNSDPMTSALSQLSLSSSK).

Belongs to the CLASP family. Interacts with microtubules.

It localises to the cytoplasm. It is found in the cytoskeleton. The protein resides in the nucleus. The protein localises to the spindle. In terms of biological role, microtubule binding protein that promotes the stabilization of dynamic microtubules. Required for mitotic spindle formation. The protein is Protein STU1 (STU1) of Cryptococcus neoformans var. neoformans serotype D (strain B-3501A) (Filobasidiella neoformans).